We begin with the raw amino-acid sequence, 73 residues long: MKKVALGKIIENTVESKYKSNSVSSSLSTGASAKLSLSEYYKTFEANKVGQHTTYDVVGKRDYTKFDKLVKKY.

This is an uncharacterized protein from Autographa californica nuclear polyhedrosis virus (AcMNPV).